A 101-amino-acid polypeptide reads, in one-letter code: Small ribosomal subunit protein uS14 (101 aa).

Positions 1–10 (MAKKSSIEKN) are enriched in basic and acidic residues. Residues 1–23 (MAKKSSIEKNNRRKRMTGNAAAK) form a disordered region.

Belongs to the universal ribosomal protein uS14 family. As to quaternary structure, part of the 30S ribosomal subunit. Contacts proteins S3 and S10.

Functionally, binds 16S rRNA, required for the assembly of 30S particles and may also be responsible for determining the conformation of the 16S rRNA at the A site. This is Small ribosomal subunit protein uS14 from Nitrobacter hamburgensis (strain DSM 10229 / NCIMB 13809 / X14).